The primary structure comprises 154 residues: MKLHDSLAENKSIRLQAEAETWQDAVKIGVDLLVAADVVEPRYYQAILDAVEQHGPYFVLAPGLAMPHGRPEEGVKKTGFALVTLKKPLEFNHEDNDPVDILITMAAVDANTHQEVGIMQIVNLFEDEENFDRLRACRTEQEVLDLIDRTNAAA.

A PTS EIIA type-2 domain is found at 6 to 150; it reads SLAENKSIRL…QEVLDLIDRT (145 aa). The active-site Tele-phosphohistidine intermediate is histidine 68. A Phosphohistidine modification is found at histidine 68.

It is found in the cytoplasm. Its function is as follows. The phosphoenolpyruvate-dependent sugar phosphotransferase system (sugar PTS), a major carbohydrate active transport system, catalyzes the phosphorylation of incoming sugar substrates concomitantly with their translocation across the cell membrane. The enzyme II UlaABC PTS system is involved in ascorbate transport. This Shigella flexneri protein is Ascorbate-specific PTS system EIIA component (ulaC).